A 215-amino-acid chain; its full sequence is Cytochrome b6 (215 aa).

Residues 32 to 52 (IFYCLGGITLTCFLVQVATGF) traverse the membrane as a helical segment. Heme c is bound at residue Cys-35. Positions 86 and 100 each coordinate heme b. 3 helical membrane-spanning segments follow: residues 90-110 (ASMM…TGGF), 116-136 (LTWV…VTGY), and 186-206 (LHTF…FLMI). The heme b site is built by His-187 and His-202.

The protein belongs to the cytochrome b family. PetB subfamily. The 4 large subunits of the cytochrome b6-f complex are cytochrome b6, subunit IV (17 kDa polypeptide, PetD), cytochrome f and the Rieske protein, while the 4 small subunits are PetG, PetL, PetM and PetN. The complex functions as a dimer. Requires heme b as cofactor. Heme c is required as a cofactor.

Its subcellular location is the plastid. The protein localises to the chloroplast thylakoid membrane. Component of the cytochrome b6-f complex, which mediates electron transfer between photosystem II (PSII) and photosystem I (PSI), cyclic electron flow around PSI, and state transitions. This chain is Cytochrome b6, found in Hordeum vulgare (Barley).